Consider the following 383-residue polypeptide: 1-deoxy-D-xylulose 5-phosphate reductoisomerase (383 aa).

8 residues coordinate NADPH: Thr10, Gly11, Ser12, Ile13, Gly36, Lys37, Asn38, and Asn122. Lys123 contacts 1-deoxy-D-xylulose 5-phosphate. Glu124 contacts NADPH. A Mn(2+)-binding site is contributed by Asp148. 1-deoxy-D-xylulose 5-phosphate-binding residues include Ser149, Glu150, Ser174, and His197. A Mn(2+)-binding site is contributed by Glu150. Gly203 is a binding site for NADPH. 1-deoxy-D-xylulose 5-phosphate contacts are provided by Ser210, Asn215, Lys216, and Glu219. Glu219 serves as a coordination point for Mn(2+).

It belongs to the DXR family. Mg(2+) is required as a cofactor. Mn(2+) serves as cofactor.

The enzyme catalyses 2-C-methyl-D-erythritol 4-phosphate + NADP(+) = 1-deoxy-D-xylulose 5-phosphate + NADPH + H(+). It functions in the pathway isoprenoid biosynthesis; isopentenyl diphosphate biosynthesis via DXP pathway; isopentenyl diphosphate from 1-deoxy-D-xylulose 5-phosphate: step 1/6. Its function is as follows. Catalyzes the NADPH-dependent rearrangement and reduction of 1-deoxy-D-xylulose-5-phosphate (DXP) to 2-C-methyl-D-erythritol 4-phosphate (MEP). In Bacillus velezensis (strain DSM 23117 / BGSC 10A6 / LMG 26770 / FZB42) (Bacillus amyloliquefaciens subsp. plantarum), this protein is 1-deoxy-D-xylulose 5-phosphate reductoisomerase.